Reading from the N-terminus, the 142-residue chain is MSSLSSSSSNVRMDRRFDWVGPPDSVSKIRKIMLRRVDNESELERQYRAAREELNQWNSDFWAEHNQLFDRQKSEFVEKKQKELGRLEHVSANELSEFYRDFLNDRHVAMMVYNKEWYRRNLQLIWPALKVNVVRFFRMARR.

The protein belongs to the COA8 family.

The protein resides in the mitochondrion inner membrane. Functionally, may be required for cytochrome c complex (COX) assembly and function, COX being the terminal component of the mitochondrial respiratory chain. This chain is COA8 family protein CBG23705, mitochondrial, found in Caenorhabditis briggsae.